Reading from the N-terminus, the 145-residue chain is 3-hydroxyacyl-[acyl-carrier-protein] dehydratase FabZ (145 aa).

His49 is an active-site residue.

The protein belongs to the thioester dehydratase family. FabZ subfamily.

The protein resides in the cytoplasm. The catalysed reaction is a (3R)-hydroxyacyl-[ACP] = a (2E)-enoyl-[ACP] + H2O. Its function is as follows. Involved in unsaturated fatty acids biosynthesis. Catalyzes the dehydration of short chain beta-hydroxyacyl-ACPs and long chain saturated and unsaturated beta-hydroxyacyl-ACPs. This is 3-hydroxyacyl-[acyl-carrier-protein] dehydratase FabZ from Rickettsia conorii (strain ATCC VR-613 / Malish 7).